Consider the following 818-residue polypeptide: Glycerol-3-phosphate acyltransferase (818 aa).

The short motif at 305–310 (CHRSHM) is the HXXXXD motif element.

Belongs to the GPAT/DAPAT family.

It localises to the cell inner membrane. It carries out the reaction sn-glycerol 3-phosphate + an acyl-CoA = a 1-acyl-sn-glycero-3-phosphate + CoA. It functions in the pathway phospholipid metabolism; CDP-diacylglycerol biosynthesis; CDP-diacylglycerol from sn-glycerol 3-phosphate: step 1/3. This Edwardsiella ictaluri (strain 93-146) protein is Glycerol-3-phosphate acyltransferase.